The chain runs to 670 residues: Probable leucine-rich repeat receptor-like protein kinase At1g68400 (670 aa).

A signal peptide spans methionine 1–serine 29. Over threonine 30–threonine 274 the chain is Extracellular. N-linked (GlcNAc...) asparagine glycans are attached at residues asparagine 52, asparagine 79, asparagine 102, asparagine 109, and asparagine 112. 6 LRR repeats span residues arginine 69–threonine 91, serine 92–threonine 114, alanine 115–leucine 137, arginine 139–threonine 162, histidine 163–aspartate 185, and leucine 186–phenylalanine 207. Asparagine 149, asparagine 182, and asparagine 190 each carry an N-linked (GlcNAc...) asparagine glycan. A disordered region spans residues serine 230–serine 266. Residues valine 253–serine 266 show a composition bias toward polar residues. A glycan (N-linked (GlcNAc...) asparagine) is linked at asparagine 268. Residues isoleucine 275–leucine 295 traverse the membrane as a helical segment. Residues tyrosine 296–glutamine 670 are Cytoplasmic-facing. The Protein kinase domain occupies arginine 362–isoleucine 636. Residue serine 364 is modified to Phosphoserine. ATP is bound by residues leucine 368–alanine 376 and lysine 390. Residue serine 443 is modified to Phosphoserine. Threonine 463 is modified (phosphothreonine). The active-site Proton acceptor is the aspartate 491. Position 616 is a phosphothreonine (threonine 616).

It belongs to the protein kinase superfamily. Ser/Thr protein kinase family.

It localises to the cell membrane. The catalysed reaction is L-seryl-[protein] + ATP = O-phospho-L-seryl-[protein] + ADP + H(+). The enzyme catalyses L-threonyl-[protein] + ATP = O-phospho-L-threonyl-[protein] + ADP + H(+). This chain is Probable leucine-rich repeat receptor-like protein kinase At1g68400, found in Arabidopsis thaliana (Mouse-ear cress).